Consider the following 825-residue polypeptide: Ent-copalyl diphosphate synthase 2, chloroplastic (825 aa).

The N-terminal 70 residues, 1 to 70 (MVLSSSCTTV…KGSSLTPIVR (70 aa)), are a transit peptide targeting the chloroplast. Residue lysine 241 coordinates substrate. Positions 373-376 (EVDD) match the DXDD motif motif. Lysine 459 provides a ligand contact to substrate.

It belongs to the terpene synthase family. Tpsc subfamily. Requires Mg(2+) as cofactor. Expressed in tassels.

It localises to the plastid. Its subcellular location is the chloroplast. The enzyme catalyses (2E,6E,10E)-geranylgeranyl diphosphate = ent-copalyl diphosphate. The protein operates within plant hormone biosynthesis; gibberellin biosynthesis. In terms of biological role, involved in gibberellin biosynthesis. Catalyzes the conversion of geranylgeranyl diphosphate to the gibberellin precursor ent-copalyl diphosphate (ent-CPP). Involved in the production of antifungal dolabralexin phytoalexins in response to biotic and abiotic stresses. In response to fungal infection and in associtation with KSL4, is involved in the production dolabradiene, a type of antifungal phytoalexin. The protein is Ent-copalyl diphosphate synthase 2, chloroplastic of Zea mays (Maize).